Reading from the N-terminus, the 867-residue chain is Alanine--tRNA ligase (867 aa).

Zn(2+) contacts are provided by His554, His558, Cys656, and His660.

Belongs to the class-II aminoacyl-tRNA synthetase family. Zn(2+) serves as cofactor.

Its subcellular location is the cytoplasm. It carries out the reaction tRNA(Ala) + L-alanine + ATP = L-alanyl-tRNA(Ala) + AMP + diphosphate. In terms of biological role, catalyzes the attachment of alanine to tRNA(Ala) in a two-step reaction: alanine is first activated by ATP to form Ala-AMP and then transferred to the acceptor end of tRNA(Ala). Also edits incorrectly charged Ser-tRNA(Ala) and Gly-tRNA(Ala) via its editing domain. In Methylococcus capsulatus (strain ATCC 33009 / NCIMB 11132 / Bath), this protein is Alanine--tRNA ligase.